Consider the following 718-residue polypeptide: Catalase-peroxidase (718 aa).

The segment at residues 98–219 (WHAAGTYRMG…LAATEMGLIY (122 aa)) is a cross-link (tryptophyl-tyrosyl-methioninium (Trp-Tyr) (with M-245)). His99 acts as the Proton acceptor in catalysis. Positions 219–245 (YVNPEGPQASGDPRSAAPFIRATFGNM) form a cross-link, tryptophyl-tyrosyl-methioninium (Tyr-Met) (with W-98). His260 contacts heme b.

This sequence belongs to the peroxidase family. Peroxidase/catalase subfamily. Homodimer or homotetramer. Heme b serves as cofactor. Formation of the three residue Trp-Tyr-Met cross-link is important for the catalase, but not the peroxidase activity of the enzyme.

It carries out the reaction H2O2 + AH2 = A + 2 H2O. It catalyses the reaction 2 H2O2 = O2 + 2 H2O. In terms of biological role, bifunctional enzyme with both catalase and broad-spectrum peroxidase activity. The protein is Catalase-peroxidase of Acinetobacter baumannii (strain AB307-0294).